We begin with the raw amino-acid sequence, 301 residues long: Phosphatidylglycerol--prolipoprotein diacylglyceryl transferase (301 aa).

3 helical membrane-spanning segments follow: residues 17 to 37, 59 to 79, and 97 to 117; these read LAVRWYGLMYLVAFIAAIVVG, MLFYGVLGTILGGRLGYVLFY, and GGMSFHGGFLGVTLAMVLFAY. Arg-142 is a binding site for a 1,2-diacyl-sn-glycero-3-phospho-(1'-sn-glycerol). Transmembrane regions (helical) follow at residues 230–250 and 265–285; these read MGAISAVFLIGYGLARFTVEF and LSMGQWLSLPMILVGIGLLVW.

This sequence belongs to the Lgt family.

It localises to the cell inner membrane. It catalyses the reaction L-cysteinyl-[prolipoprotein] + a 1,2-diacyl-sn-glycero-3-phospho-(1'-sn-glycerol) = an S-1,2-diacyl-sn-glyceryl-L-cysteinyl-[prolipoprotein] + sn-glycerol 1-phosphate + H(+). The protein operates within protein modification; lipoprotein biosynthesis (diacylglyceryl transfer). Catalyzes the transfer of the diacylglyceryl group from phosphatidylglycerol to the sulfhydryl group of the N-terminal cysteine of a prolipoprotein, the first step in the formation of mature lipoproteins. In Paraburkholderia phytofirmans (strain DSM 17436 / LMG 22146 / PsJN) (Burkholderia phytofirmans), this protein is Phosphatidylglycerol--prolipoprotein diacylglyceryl transferase.